We begin with the raw amino-acid sequence, 121 residues long: Methylglyoxal synthase (121 aa).

One can recognise an MGS-like domain in the interval 1-121 (MMKVALIAHD…SAELFLRALN (121 aa)). Substrate is bound by residues His9, Lys13, 35–38 (TGTT), and 55–56 (SG). The Proton donor/acceptor role is filled by Asp61. His88 is a substrate binding site.

Belongs to the methylglyoxal synthase family.

It catalyses the reaction dihydroxyacetone phosphate = methylglyoxal + phosphate. Catalyzes the formation of methylglyoxal from dihydroxyacetone phosphate. This Carboxydothermus hydrogenoformans (strain ATCC BAA-161 / DSM 6008 / Z-2901) protein is Methylglyoxal synthase.